The sequence spans 348 residues: uncharacterized protein (348 aa).

The segment covering 1 to 11 (MTNPQGPPNDP) has biased composition (pro residues). The tract at residues 1–83 (MTNPQGPPND…RSGRQAAHQA (83 aa)) is disordered. 2 helical membrane passes run 111-131 (LTVFLVLIIVFSLVLAGLIGG) and 235-255 (IPILGAFVTSSVVTHPADGTV).

It localises to the cell membrane. This is an uncharacterized protein from Mycobacterium tuberculosis (strain CDC 1551 / Oshkosh).